The chain runs to 335 residues: Methionine import ATP-binding protein MetN 1 (335 aa).

In terms of domain architecture, ABC transporter spans 2 to 242; the sequence is IEFQQVHKTY…PQHPTTKRFV (241 aa). Residue 38–45 participates in ATP binding; it reads GHSGAGKS.

The protein belongs to the ABC transporter superfamily. Methionine importer (TC 3.A.1.24) family. As to quaternary structure, the complex is composed of two ATP-binding proteins (MetN), two transmembrane proteins (MetI) and a solute-binding protein (MetQ).

Its subcellular location is the cell inner membrane. It carries out the reaction L-methionine(out) + ATP + H2O = L-methionine(in) + ADP + phosphate + H(+). It catalyses the reaction D-methionine(out) + ATP + H2O = D-methionine(in) + ADP + phosphate + H(+). In terms of biological role, part of the ABC transporter complex MetNIQ involved in methionine import. Responsible for energy coupling to the transport system. The polypeptide is Methionine import ATP-binding protein MetN 1 (Pseudomonas putida (strain ATCC 47054 / DSM 6125 / CFBP 8728 / NCIMB 11950 / KT2440)).